Consider the following 249-residue polypeptide: tRNA pseudouridine synthase A (249 aa).

The active-site Nucleophile is the D53. Y111 contributes to the substrate binding site.

This sequence belongs to the tRNA pseudouridine synthase TruA family. Homodimer.

The enzyme catalyses uridine(38/39/40) in tRNA = pseudouridine(38/39/40) in tRNA. Formation of pseudouridine at positions 38, 39 and 40 in the anticodon stem and loop of transfer RNAs. This is tRNA pseudouridine synthase A from Streptococcus equi subsp. zooepidemicus (strain MGCS10565).